The following is a 293-amino-acid chain: Alcohol dehydrogenase 1 (293 aa).

Residues Cys26, Cys29, Cys32, Cys40, and Cys104 each coordinate Zn(2+). NAD(+) contacts are provided by residues 129-134 (GLGAVG), Asp153, Arg158, Thr199, Val222, 222-224 (VGV), and Phe249.

It belongs to the zinc-containing alcohol dehydrogenase family. Homodimer. Zn(2+) is required as a cofactor.

The protein localises to the cytoplasm. The enzyme catalyses a primary alcohol + NAD(+) = an aldehyde + NADH + H(+). It carries out the reaction a secondary alcohol + NAD(+) = a ketone + NADH + H(+). This Zea luxurians (Guatemalan teosinte) protein is Alcohol dehydrogenase 1 (ADH1).